The following is an 84-amino-acid chain: Small ribosomal subunit protein eS27z (84 aa).

The C4-type zinc-finger motif lies at 39-61 (CQGCFNITTVFSHSQTVVMCGNC).

Belongs to the eukaryotic ribosomal protein eS27 family. (Microbial infection) May interact with Tomato yellow leaf curl virus (TYLCV) and papaya leaf curl China virus (PaLcuCNV) C2 proteins. This interaction prevents activation of Jasmonate signaling, thereby facilitating viral uptake by insects vectors. Zn(2+) is required as a cofactor.

This Arabidopsis thaliana (Mouse-ear cress) protein is Small ribosomal subunit protein eS27z (RPS27A).